A 117-amino-acid polypeptide reads, in one-letter code: Large ribosomal subunit protein bL19 (117 aa).

It belongs to the bacterial ribosomal protein bL19 family.

In terms of biological role, this protein is located at the 30S-50S ribosomal subunit interface and may play a role in the structure and function of the aminoacyl-tRNA binding site. The protein is Large ribosomal subunit protein bL19 of Kineococcus radiotolerans (strain ATCC BAA-149 / DSM 14245 / SRS30216).